Consider the following 96-residue polypeptide: Large ribosomal subunit protein uL23 (96 aa).

This sequence belongs to the universal ribosomal protein uL23 family. In terms of assembly, part of the 50S ribosomal subunit. Contacts protein L29, and trigger factor when it is bound to the ribosome.

In terms of biological role, one of the early assembly proteins it binds 23S rRNA. One of the proteins that surrounds the polypeptide exit tunnel on the outside of the ribosome. Forms the main docking site for trigger factor binding to the ribosome. The chain is Large ribosomal subunit protein uL23 from Ruthia magnifica subsp. Calyptogena magnifica.